We begin with the raw amino-acid sequence, 668 residues long: Fe(2+) transporter FeoB (668 aa).

Residues 3–165 form the FeoB-type G domain; the sequence is SYEIALIGNP…KKAISIAVKD (163 aa). Residue 10–17 participates in GTP binding; sequence GNPNVGKS. Mg(2+)-binding residues include Asn21, Ala22, Thr24, and Gly25. Residues 35–39, 56–59, 116–119, and 145–147 contribute to the GTP site; these read GVTVE, DLPG, NKMD, and SAA. The next 8 helical transmembrane spans lie at 344–364, 386–406, 418–438, 450–470, 515–535, 574–594, 613–633, and 643–663; these read VGAVLVFFPILAFLFFAISFL, LPGKAVISMVMGFGCNVPAIM, ILTILINPLLSCSARLPIYAL, VVILSMYALGVVLALITAFLF, IIVFGVILVWVLSVYGPSGYL, ALVFGIIAKEVVVGSLAMLYG, AYAFMAFSLIYLPCIATLAVI, and LFAVTYEMILAYVVALVISVI.

The protein belongs to the TRAFAC class TrmE-Era-EngA-EngB-Septin-like GTPase superfamily. FeoB GTPase (TC 9.A.8) family. In terms of assembly, the crystallized N-terminal domain is a homodimer.

The protein resides in the cell membrane. In terms of biological role, probable transporter of a GTP-driven Fe(2+) uptake system, might be able to transport Fe(2+) into or out of the cell. This is Fe(2+) transporter FeoB from Methanocaldococcus jannaschii (strain ATCC 43067 / DSM 2661 / JAL-1 / JCM 10045 / NBRC 100440) (Methanococcus jannaschii).